A 363-amino-acid chain; its full sequence is Probable tRNA pseudouridine synthase D (363 aa).

Catalysis depends on aspartate 82, which acts as the Nucleophile. A TRUD domain is found at 151–363 (YLPAYIGYQR…IARTDPRLFT (213 aa)).

It belongs to the pseudouridine synthase TruD family.

The catalysed reaction is uridine(13) in tRNA = pseudouridine(13) in tRNA. Its function is as follows. Could be responsible for synthesis of pseudouridine from uracil-13 in transfer RNAs. The polypeptide is Probable tRNA pseudouridine synthase D (Sulfurisphaera tokodaii (strain DSM 16993 / JCM 10545 / NBRC 100140 / 7) (Sulfolobus tokodaii)).